A 550-amino-acid polypeptide reads, in one-letter code: Probable terpene synthase 2 (550 aa).

Mg(2+) is bound by residues Asp305, Asp309, and Glu457. The DDXXD motif signature appears at 305-309 (DDIYD).

It belongs to the terpene synthase family. Requires Mg(2+) as cofactor.

In terms of biological role, probable sesquiterpene synthase. The chain is Probable terpene synthase 2 (TPS2) from Ricinus communis (Castor bean).